A 277-amino-acid polypeptide reads, in one-letter code: Shikimate dehydrogenase (NADP(+)) (277 aa).

Shikimate-binding positions include 14–16 (SKS) and Thr-61. Lys-65 (proton acceptor) is an active-site residue. Asp-77 is an NADP(+) binding site. Residues Asn-86 and Asp-102 each coordinate shikimate. Residues 127–131 (GAGGA), 151–156 (NRTPDK), and Met-215 each bind NADP(+). Position 217 (Tyr-217) interacts with shikimate. Gly-239 is a binding site for NADP(+).

Belongs to the shikimate dehydrogenase family. In terms of assembly, homodimer.

It carries out the reaction shikimate + NADP(+) = 3-dehydroshikimate + NADPH + H(+). Its pathway is metabolic intermediate biosynthesis; chorismate biosynthesis; chorismate from D-erythrose 4-phosphate and phosphoenolpyruvate: step 4/7. Functionally, involved in the biosynthesis of the chorismate, which leads to the biosynthesis of aromatic amino acids. Catalyzes the reversible NADPH linked reduction of 3-dehydroshikimate (DHSA) to yield shikimate (SA). This is Shikimate dehydrogenase (NADP(+)) from Nitrosomonas eutropha (strain DSM 101675 / C91 / Nm57).